Reading from the N-terminus, the 299-residue chain is Ribosomal protein L11 methyltransferase (299 aa).

S-adenosyl-L-methionine-binding residues include threonine 139, glycine 166, aspartate 188, and asparagine 231.

Belongs to the methyltransferase superfamily. PrmA family.

Its subcellular location is the cytoplasm. The enzyme catalyses L-lysyl-[protein] + 3 S-adenosyl-L-methionine = N(6),N(6),N(6)-trimethyl-L-lysyl-[protein] + 3 S-adenosyl-L-homocysteine + 3 H(+). Its function is as follows. Methylates ribosomal protein L11. This chain is Ribosomal protein L11 methyltransferase, found in Thermosynechococcus vestitus (strain NIES-2133 / IAM M-273 / BP-1).